The sequence spans 352 residues: UDP-N-acetylglucosamine--N-acetylmuramyl-(pentapeptide) pyrophosphoryl-undecaprenol N-acetylglucosamine transferase (352 aa).

Residues 11 to 13 (TGG), Asn120, Arg161, Ser188, and Gln286 each bind UDP-N-acetyl-alpha-D-glucosamine.

Belongs to the glycosyltransferase 28 family. MurG subfamily.

It localises to the cell inner membrane. It catalyses the reaction di-trans,octa-cis-undecaprenyl diphospho-N-acetyl-alpha-D-muramoyl-L-alanyl-D-glutamyl-meso-2,6-diaminopimeloyl-D-alanyl-D-alanine + UDP-N-acetyl-alpha-D-glucosamine = di-trans,octa-cis-undecaprenyl diphospho-[N-acetyl-alpha-D-glucosaminyl-(1-&gt;4)]-N-acetyl-alpha-D-muramoyl-L-alanyl-D-glutamyl-meso-2,6-diaminopimeloyl-D-alanyl-D-alanine + UDP + H(+). It participates in cell wall biogenesis; peptidoglycan biosynthesis. Cell wall formation. Catalyzes the transfer of a GlcNAc subunit on undecaprenyl-pyrophosphoryl-MurNAc-pentapeptide (lipid intermediate I) to form undecaprenyl-pyrophosphoryl-MurNAc-(pentapeptide)GlcNAc (lipid intermediate II). The sequence is that of UDP-N-acetylglucosamine--N-acetylmuramyl-(pentapeptide) pyrophosphoryl-undecaprenol N-acetylglucosamine transferase from Prochlorococcus marinus (strain NATL1A).